We begin with the raw amino-acid sequence, 169 residues long: S-ribosylhomocysteine lyase (169 aa).

Residues His-54, His-58, and Cys-128 each contribute to the Fe cation site.

It belongs to the LuxS family. Homodimer. It depends on Fe cation as a cofactor.

It carries out the reaction S-(5-deoxy-D-ribos-5-yl)-L-homocysteine = (S)-4,5-dihydroxypentane-2,3-dione + L-homocysteine. Its function is as follows. Involved in the synthesis of autoinducer 2 (AI-2) which is secreted by bacteria and is used to communicate both the cell density and the metabolic potential of the environment. The regulation of gene expression in response to changes in cell density is called quorum sensing. Catalyzes the transformation of S-ribosylhomocysteine (RHC) to homocysteine (HC) and 4,5-dihydroxy-2,3-pentadione (DPD). In Shewanella amazonensis (strain ATCC BAA-1098 / SB2B), this protein is S-ribosylhomocysteine lyase.